Consider the following 1114-residue polypeptide: Hephaestin-like protein (1114 aa).

Residues 1 to 26 (MMDRSNAAFVLTACFIFSQLICHVAA) form the signal peptide. Plastocyanin-like domains lie at 27-210 (ITRT…LICR), 218-365 (QQSG…VTKC), 380-562 (KRTY…LLTC), 572-719 (TRKD…VNTC), 730-915 (KTRD…LIIC), and 924-1114 (TEER…LLKA). Over 27–1091 (ITRTYYIAAV…KTTPKPITAA (1065 aa)) the chain is Extracellular. A glycan (N-linked (GlcNAc...) asparagine) is linked at Asn121. Residues His129, His131, His189, and His191 each contribute to the Cu cation site. The cysteines at positions 183 and 209 are disulfide-linked. An N-linked (GlcNAc...) asparagine glycan is attached at Asn236. A disulfide bond links Cys284 and Cys365. 3 residues coordinate Cu cation: His303, Cys346, and His351. 3 N-linked (GlcNAc...) asparagine glycosylation sites follow: Asn361, Asn478, and Asn489. Intrachain disulfides connect Cys536/Cys562 and Cys638/Cys719. Residues His657, Cys700, His705, and Met710 each contribute to the Cu cation site. N-linked (GlcNAc...) asparagine glycosylation is present at Asn831. A disulfide bond links Cys889 and Cys915. Residue Asn944 is glycosylated (N-linked (GlcNAc...) asparagine). His1014, His1017, His1019, His1059, Cys1060, His1061, His1065, and Met1070 together coordinate Cu cation. Residues 1092-1112 (SSFVTSSIFIYLSFPVLAMLL) form a helical membrane-spanning segment. Residues 1113-1114 (KA) lie on the Cytoplasmic side of the membrane.

The protein belongs to the multicopper oxidase family. Cu cation is required as a cofactor. Component of the acid-insoluble and acid-soluble organic matrix of the aragonitic skeleton (at protein level).

It is found in the membrane. Its function is as follows. May function as a ferroxidase and may be involved in copper transport and homeostasis. The polypeptide is Hephaestin-like protein (Acropora millepora (Staghorn coral)).